Reading from the N-terminus, the 272-residue chain is Nitrogenase iron protein (272 aa).

8–15 contributes to the ATP binding site; it reads GKGGIGKS. Cys94 contacts [4Fe-4S] cluster. Arg97 carries the ADP-ribosylarginine; by dinitrogenase reductase ADP-ribosyltransferase modification. Cys129 lines the [4Fe-4S] cluster pocket.

It belongs to the NifH/BchL/ChlL family. Homodimer. [4Fe-4S] cluster serves as cofactor. Post-translationally, the reversible ADP-ribosylation of Arg-97 inactivates the nitrogenase reductase and regulates nitrogenase activity.

It catalyses the reaction N2 + 8 reduced [2Fe-2S]-[ferredoxin] + 16 ATP + 16 H2O = H2 + 8 oxidized [2Fe-2S]-[ferredoxin] + 2 NH4(+) + 16 ADP + 16 phosphate + 6 H(+). The key enzymatic reactions in nitrogen fixation are catalyzed by the nitrogenase complex, which has 2 components: the iron protein and the molybdenum-iron protein. The chain is Nitrogenase iron protein from Desulforamulus reducens (strain ATCC BAA-1160 / DSM 100696 / MI-1) (Desulfotomaculum reducens).